The chain runs to 128 residues: MSAKTDEILESLKTLTLLEAAELVKQIEEAFGVSAAAPVGGVVVAAAAGAAAEAVEEKTEFDVVLEEVPADKKIAVLKVVRGITGLGLKEAKDLVEAAPKPIKEGVSKDDAEAAKKELEEAGAKVSVK.

The protein belongs to the bacterial ribosomal protein bL12 family. Homodimer. Part of the ribosomal stalk of the 50S ribosomal subunit. Forms a multimeric L10(L12)X complex, where L10 forms an elongated spine to which 2 to 4 L12 dimers bind in a sequential fashion. Binds GTP-bound translation factors.

Forms part of the ribosomal stalk which helps the ribosome interact with GTP-bound translation factors. Is thus essential for accurate translation. This chain is Large ribosomal subunit protein bL12, found in Synechococcus sp. (strain ATCC 27144 / PCC 6301 / SAUG 1402/1) (Anacystis nidulans).